Here is a 417-residue protein sequence, read N- to C-terminus: NADH-quinone oxidoreductase subunit D (417 aa).

It belongs to the complex I 49 kDa subunit family. NDH-1 is composed of 14 different subunits. Subunits NuoB, C, D, E, F, and G constitute the peripheral sector of the complex.

The protein localises to the cell inner membrane. It catalyses the reaction a quinone + NADH + 5 H(+)(in) = a quinol + NAD(+) + 4 H(+)(out). NDH-1 shuttles electrons from NADH, via FMN and iron-sulfur (Fe-S) centers, to quinones in the respiratory chain. The immediate electron acceptor for the enzyme in this species is believed to be ubiquinone. Couples the redox reaction to proton translocation (for every two electrons transferred, four hydrogen ions are translocated across the cytoplasmic membrane), and thus conserves the redox energy in a proton gradient. The protein is NADH-quinone oxidoreductase subunit D of Burkholderia cenocepacia (strain HI2424).